Consider the following 236-residue polypeptide: Purine nucleoside phosphorylase DeoD-type 2 (236 aa).

His-5 contacts a purine D-ribonucleoside. Phosphate-binding positions include Gly-21, Arg-25, Arg-44, and 88–91; that span reads RVGT. A purine D-ribonucleoside-binding positions include 180-182 and 204-205; these read EME and SD. Asp-205 serves as the catalytic Proton donor.

It belongs to the PNP/UDP phosphorylase family. As to quaternary structure, homohexamer; trimer of homodimers.

The enzyme catalyses a purine D-ribonucleoside + phosphate = a purine nucleobase + alpha-D-ribose 1-phosphate. It carries out the reaction a purine 2'-deoxy-D-ribonucleoside + phosphate = a purine nucleobase + 2-deoxy-alpha-D-ribose 1-phosphate. Catalyzes the reversible phosphorolytic breakdown of the N-glycosidic bond in the beta-(deoxy)ribonucleoside molecules, with the formation of the corresponding free purine bases and pentose-1-phosphate. The protein is Purine nucleoside phosphorylase DeoD-type 2 of Shewanella oneidensis (strain ATCC 700550 / JCM 31522 / CIP 106686 / LMG 19005 / NCIMB 14063 / MR-1).